The chain runs to 281 residues: 2-dehydro-3-deoxyphosphooctonate aldolase (281 aa).

The protein belongs to the KdsA family.

It is found in the cytoplasm. The enzyme catalyses D-arabinose 5-phosphate + phosphoenolpyruvate + H2O = 3-deoxy-alpha-D-manno-2-octulosonate-8-phosphate + phosphate. It functions in the pathway carbohydrate biosynthesis; 3-deoxy-D-manno-octulosonate biosynthesis; 3-deoxy-D-manno-octulosonate from D-ribulose 5-phosphate: step 2/3. The protein operates within bacterial outer membrane biogenesis; lipopolysaccharide biosynthesis. This chain is 2-dehydro-3-deoxyphosphooctonate aldolase, found in Acidithiobacillus ferrooxidans (strain ATCC 23270 / DSM 14882 / CIP 104768 / NCIMB 8455) (Ferrobacillus ferrooxidans (strain ATCC 23270)).